We begin with the raw amino-acid sequence, 157 residues long: Deoxyuridine 5'-triphosphate nucleotidohydrolase (157 aa).

8 residues coordinate dUMP: S63, G76, D79, Y82, K87, R132, F137, and G138. The interval 125–157 (NDLESTERGAGGFGSTGINDEKKRKLDEAEAKE) is disordered. Basic and acidic residues predominate over residues 143-157 (NDEKKRKLDEAEAKE).

The protein belongs to the dUTPase family. In terms of assembly, homotrimer. Mg(2+) is required as a cofactor.

It catalyses the reaction dUTP + H2O = dUMP + diphosphate + H(+). The protein operates within pyrimidine metabolism; dUMP biosynthesis; dUMP from dCTP (dUTP route): step 2/2. Functionally, involved in nucleotide metabolism via production of dUMP, the immediate precursor of thymidine nucleotides, and decreases the intracellular concentration of dUTP so that uracil cannot be incorporated into DNA. The polypeptide is Deoxyuridine 5'-triphosphate nucleotidohydrolase (DUT1) (Yarrowia lipolytica (strain CLIB 122 / E 150) (Yeast)).